The following is a 190-amino-acid chain: Pyridoxal 5'-phosphate synthase subunit PdxT (190 aa).

46–48 (GES) lines the L-glutamine pocket. Cys78 functions as the Nucleophile in the catalytic mechanism. Residues Arg105 and 134–135 (IR) contribute to the L-glutamine site. Catalysis depends on charge relay system residues His170 and Glu172.

This sequence belongs to the glutaminase PdxT/SNO family. As to quaternary structure, in the presence of PdxS, forms a dodecamer of heterodimers. Only shows activity in the heterodimer.

It catalyses the reaction aldehydo-D-ribose 5-phosphate + D-glyceraldehyde 3-phosphate + L-glutamine = pyridoxal 5'-phosphate + L-glutamate + phosphate + 3 H2O + H(+). It carries out the reaction L-glutamine + H2O = L-glutamate + NH4(+). Its pathway is cofactor biosynthesis; pyridoxal 5'-phosphate biosynthesis. In terms of biological role, catalyzes the hydrolysis of glutamine to glutamate and ammonia as part of the biosynthesis of pyridoxal 5'-phosphate. The resulting ammonia molecule is channeled to the active site of PdxS. The polypeptide is Pyridoxal 5'-phosphate synthase subunit PdxT (Clostridium beijerinckii (strain ATCC 51743 / NCIMB 8052) (Clostridium acetobutylicum)).